The following is a 430-amino-acid chain: Chromatin assembly factor 1 p55 subunit (430 aa).

2 positions are modified to phosphoserine: Ser11 and Ser100. 6 WD repeats span residues 126–159 (NHEGEVNRARYMPQNACVIATKTPSSDVLVFDYT), 179–210 (GHQKEGYGLSWNPNLNGYLLSASDDHTICLWD), 229–260 (GHTAVVEDVAWHLLHESLFGSVADDQKLMIWD), 275–306 (AHTAEVNCLSFNPYSEFILATGSADKTVALWD), 319–350 (SHKDEIFQVQWSPHNETILASSGTDRRLHVWD), and 376–407 (GHTAKISDFSWNPNEPWIICSVSEDNIMQVWQ).

The protein belongs to the WD repeat RBAP46/RBAP48/MSI1 family. In terms of assembly, probably binds directly to helix 1 of the histone fold of histone H4, a region that is not accessible when H4 is in chromatin. Self associates. Associates with chromatin. Component of the CAF-1 complex, composed of Caf1-55, Caf1-105 and Caf1-180; within the CAF-1 complex, Caf1-180 interacts directly with both Caf1-55 and Caf1-105. Component of the NuRD complex, composed of at least Caf1-55, Mi-2, MTA1-like and HDAC1/Rpd3. Within the NuRD complex, Caf1-55 may interact directly with Mi-2, MTA1-like and HDAC1/Rpd3. The NuRD complex may also associate with the methyl-DNA binding protein MBD-like via Caf1-55 and Mi-2. Component of the NURF complex, composed of Caf1-55, E(bx), Nurf-38 and Iswi. Component of the polycomb repressive complex 2 (PRC2, also known as the Esc/E(Z) complex), composed of Caf1-55, esc, E(z), Su(z)12, and possibly pho. PRC2 associates with the accessory components Jarid2 and jing to form the PRC2 Jarid2-jing variant (PRC2.2). PRC2 may also associate with Pcl and HDAC1/Rpd3 during early embryogenesis. Interacts with Rbf and Rbf2. Component of the DREAM complex at least composed of Myb, Caf1-55, mip40, mip120, mip130, E2f2, Dp, Rbf, Rbf2, lin-52, HDAC1/Rpd3 and l(3)mbt.

It localises to the nucleus. Its function is as follows. Core histone-binding subunit that may target chromatin assembly factors, chromatin remodeling factors and histone deacetylases to their histone substrates in a manner that is regulated by nucleosomal DNA. Component of several complexes which regulate chromatin metabolism. These include the chromatin assembly factor 1 (CAF-1) complex, which is required for chromatin assembly following DNA replication and DNA repair; the nucleosome remodeling and deacetylase complex (the NuRD complex), which promotes transcriptional repression by histone deacetylation and nucleosome remodeling; the nucleosome remodeling factor (NURF) complex, which catalyzes ATP-dependent nucleosome sliding and facilitates transcription of chromatin; and the polycomb group (PcG) repressor complex ESC-E(Z), which promotes repression of homeotic genes during development. Also required for transcriptional repression of E2F target genes by E2f2 and Rbf or Rbf2. This chain is Chromatin assembly factor 1 p55 subunit, found in Drosophila melanogaster (Fruit fly).